Here is a 305-residue protein sequence, read N- to C-terminus: MIKQRTLKCIVQATGVGLHTGKKVTLTLRPAPANTGVIYRRTDLNPPVDFPADAKSVRDTMLCTCLVNEHDVRISTVEHLNAALAGLGIDNIVIEVNAPEIPIMDGSAAPFVYLLLDAGIDELNCAKKFVRIKETVRVEDGDKWAEFKPYNGFSLDFTIDFNHPAIDSSNQRYAMNFSADAFMRQISRARTFGFMRDIEYLQSRGLCLGGSFDCAIVVDDYRVLNEDGLRFEDEFVRHKMLDAIGDLFMCGHNIIGAFTAYKSGHALNNKLLQAVLAKQEAWEYVTFQDDAELPLAFKAPSAVLA.

Zn(2+) contacts are provided by histidine 79, histidine 238, and aspartate 242. Histidine 265 (proton donor) is an active-site residue.

This sequence belongs to the LpxC family. Zn(2+) is required as a cofactor.

It carries out the reaction a UDP-3-O-[(3R)-3-hydroxyacyl]-N-acetyl-alpha-D-glucosamine + H2O = a UDP-3-O-[(3R)-3-hydroxyacyl]-alpha-D-glucosamine + acetate. The protein operates within glycolipid biosynthesis; lipid IV(A) biosynthesis; lipid IV(A) from (3R)-3-hydroxytetradecanoyl-[acyl-carrier-protein] and UDP-N-acetyl-alpha-D-glucosamine: step 2/6. Its function is as follows. Catalyzes the hydrolysis of UDP-3-O-myristoyl-N-acetylglucosamine to form UDP-3-O-myristoylglucosamine and acetate, the committed step in lipid A biosynthesis. This chain is UDP-3-O-acyl-N-acetylglucosamine deacetylase, found in Escherichia coli O45:K1 (strain S88 / ExPEC).